Consider the following 157-residue polypeptide: Polyferredoxin protein VhcB (157 aa).

3 consecutive 4Fe-4S ferredoxin-type domains span residues 23–52 (NGISWDREKCEYCGPCAIKCPNDAIMVVNP), 62–92 (KTERANEFKMCDLCGTCVSACPTEALQMGKI), and 100–129 (DRIEFTPSLCDSCGACVEICPQNVLKLNEE). Residues Cys32, Cys35, Cys38, Cys42, Cys72, Cys75, Cys78, Cys82, Cys109, Cys112, Cys115, Cys119, Cys136, Cys139, Cys142, and Cys146 each contribute to the [4Fe-4S] cluster site.

[4Fe-4S] cluster is required as a cofactor.

This chain is Polyferredoxin protein VhcB (vhcB), found in Methanococcus voltae.